Reading from the N-terminus, the 495-residue chain is Lysine--tRNA ligase (495 aa).

2 residues coordinate Mg(2+): Glu-406 and Glu-413.

Belongs to the class-II aminoacyl-tRNA synthetase family. As to quaternary structure, homodimer. It depends on Mg(2+) as a cofactor.

It is found in the cytoplasm. It catalyses the reaction tRNA(Lys) + L-lysine + ATP = L-lysyl-tRNA(Lys) + AMP + diphosphate. This is Lysine--tRNA ligase from Staphylococcus saprophyticus subsp. saprophyticus (strain ATCC 15305 / DSM 20229 / NCIMB 8711 / NCTC 7292 / S-41).